A 113-amino-acid polypeptide reads, in one-letter code: Large ribosomal subunit protein uL24 (113 aa).

The disordered stretch occupies residues 48-70; it reads HRKRVTNDKGTSSGGLEKRESPM.

Belongs to the universal ribosomal protein uL24 family. In terms of assembly, part of the 50S ribosomal subunit.

In terms of biological role, one of two assembly initiator proteins, it binds directly to the 5'-end of the 23S rRNA, where it nucleates assembly of the 50S subunit. Its function is as follows. One of the proteins that surrounds the polypeptide exit tunnel on the outside of the subunit. The sequence is that of Large ribosomal subunit protein uL24 from Tropheryma whipplei (strain TW08/27) (Whipple's bacillus).